Consider the following 176-residue polypeptide: Protein FAM89A (176 aa).

The disordered stretch occupies residues Asp140–His165.

This sequence belongs to the FAM89 family.

This chain is Protein FAM89A (Fam89a), found in Rattus norvegicus (Rat).